Reading from the N-terminus, the 968-residue chain is Alanine--tRNA ligase, cytoplasmic (968 aa).

M1 is subject to N-acetylmethionine. Residues S3 and S8 each carry the phosphoserine modification. At K19 the chain carries N6-acetyllysine. ATP is bound by residues R77, H95, W176, and I214 to N216. The L-alanine site is built by N216 and D239. ATP is bound at residue G243. Residues S399 and S555 each carry the phosphoserine modification. H605, H609, C723, and H727 together coordinate Zn(2+). Residues R750–A763 carry the Nuclear localization signal motif. K876 carries the N6-acetyllysine modification. N6,N6,N6-trimethyllysine; alternate is present on K943. K943 carries the post-translational modification N6,N6-dimethyllysine; alternate. N6-methyllysine; alternate is present on K943.

This sequence belongs to the class-II aminoacyl-tRNA synthetase family. In terms of assembly, monomer. Interacts with ANKRD16; the interaction is direct. The cofactor is Zn(2+). In terms of processing, ISGylated. Post-translationally, methylation at 'Lys-943' by METTL21C.

It localises to the cytoplasm. It is found in the nucleus. The catalysed reaction is tRNA(Ala) + L-alanine + ATP = L-alanyl-tRNA(Ala) + AMP + diphosphate. The enzyme catalyses (S)-lactate + ATP + H(+) = (S)-lactoyl-AMP + diphosphate. It carries out the reaction (S)-lactoyl-AMP + L-lysyl-[protein] = N(6)-[(S)-lactoyl]-L-lysyl-[protein] + AMP + 2 H(+). With respect to regulation, the protein lactyltransferase activity is inhibited by beta-alanine. Functionally, catalyzes the attachment of alanine to tRNA(Ala) in a two-step reaction: alanine is first activated by ATP to form Ala-AMP and then transferred to the acceptor end of tRNA(Ala). Also edits incorrectly charged tRNA(Ala) via its editing domain. In presence of high levels of lactate, also acts as a protein lactyltransferase that mediates lactylation of lysine residues in target proteins, such as TEAD1, TP53/p53 and YAP1. Protein lactylation takes place in a two-step reaction: lactate is first activated by ATP to form lactate-AMP and then transferred to lysine residues of target proteins. Acts as an inhibitor of TP53/p53 activity by catalyzing lactylation of TP53/p53. Acts as a positive regulator of the Hippo pathway by mediating lactylation of TEAD1 and YAP1. This is Alanine--tRNA ligase, cytoplasmic from Homo sapiens (Human).